We begin with the raw amino-acid sequence, 351 residues long: N-acetyl-gamma-glutamyl-phosphate reductase (351 aa).

Cys150 is a catalytic residue.

This sequence belongs to the NAGSA dehydrogenase family. Type 1 subfamily.

It localises to the cytoplasm. It carries out the reaction N-acetyl-L-glutamate 5-semialdehyde + phosphate + NADP(+) = N-acetyl-L-glutamyl 5-phosphate + NADPH + H(+). It participates in amino-acid biosynthesis; L-arginine biosynthesis; N(2)-acetyl-L-ornithine from L-glutamate: step 3/4. Catalyzes the NADPH-dependent reduction of N-acetyl-5-glutamyl phosphate to yield N-acetyl-L-glutamate 5-semialdehyde. The protein is N-acetyl-gamma-glutamyl-phosphate reductase of Heliobacterium modesticaldum (strain ATCC 51547 / Ice1).